The following is a 540-amino-acid chain: UDP-N-acetylmuramyl-tripeptide synthetase (540 aa).

Ser-33 serves as a coordination point for UDP-N-acetyl-alpha-D-muramoyl-L-alanyl-D-glutamate. 114 to 120 (GTEGKSS) lines the ATP pocket. Residues 158 to 159 (TT), Ser-185, and Arg-195 each bind UDP-N-acetyl-alpha-D-muramoyl-L-alanyl-D-glutamate. Position 227 is an N6-carboxylysine (Lys-227).

Belongs to the MurCDEF family. MurE subfamily. In terms of processing, carboxylation is probably crucial for Mg(2+) binding and, consequently, for the gamma-phosphate positioning of ATP.

It localises to the cytoplasm. Its pathway is cell wall biogenesis; peptidoglycan biosynthesis. Functionally, catalyzes the addition of an amino acid to the nucleotide precursor UDP-N-acetylmuramoyl-L-alanyl-D-glutamate (UMAG) in the biosynthesis of bacterial cell-wall peptidoglycan. This Treponema pallidum (strain Nichols) protein is UDP-N-acetylmuramyl-tripeptide synthetase.